Consider the following 347-residue polypeptide: Protein RecA (347 aa).

64 to 71 (GPESSGKT) is a binding site for ATP. Residues 328-347 (DKVDEDKTEEEASQESLDLK) form a disordered region.

The protein belongs to the RecA family.

It localises to the cytoplasm. In terms of biological role, can catalyze the hydrolysis of ATP in the presence of single-stranded DNA, the ATP-dependent uptake of single-stranded DNA by duplex DNA, and the ATP-dependent hybridization of homologous single-stranded DNAs. It interacts with LexA causing its activation and leading to its autocatalytic cleavage. In Oceanobacillus iheyensis (strain DSM 14371 / CIP 107618 / JCM 11309 / KCTC 3954 / HTE831), this protein is Protein RecA.